The chain runs to 379 residues: RING finger protein 215 (379 aa).

2 disordered regions span residues 1 to 21 and 44 to 63; these read MGSADRPALRSPSLPPPPPSP and AADGSEPATGEGRGGARSVR. Residues 1–24 lie on the Cytoplasmic side of the membrane; that stretch reads MGSADRPALRSPSLPPPPPSPPSP. The helical transmembrane segment at 25–45 threads the bilayer; the sequence is LLLLLPLLPLWLGLMGPGAAA. Over 46–252 the chain is Extracellular; it reads DGSEPATGEG…GGAQAQEQKP (207 aa). An N-linked (GlcNAc...) asparagine glycan is attached at Asn-188. The chain crosses the membrane as a helical span at residues 253-273; it reads LQQLWNAILLVAMLLCTGLVV. Topologically, residues 274-379 are cytoplasmic; sequence QAQRQASRQN…NVLGNHYSDD (106 aa). The segment at 327-368 adopts an RING-type; atypical zinc-finger fold; that stretch reads CAVCLDYFCNKQWLRVLPCKHEFHRDCVDPWLMLQQTCPLCK.

Its subcellular location is the membrane. The sequence is that of RING finger protein 215 (Rnf215) from Mus musculus (Mouse).